The following is a 267-amino-acid chain: Acyl-[acyl-carrier-protein]--UDP-N-acetylglucosamine O-acyltransferase (267 aa).

Belongs to the transferase hexapeptide repeat family. LpxA subfamily. In terms of assembly, homotrimer.

It localises to the cytoplasm. The catalysed reaction is a (3R)-hydroxyacyl-[ACP] + UDP-N-acetyl-alpha-D-glucosamine = a UDP-3-O-[(3R)-3-hydroxyacyl]-N-acetyl-alpha-D-glucosamine + holo-[ACP]. The protein operates within glycolipid biosynthesis; lipid IV(A) biosynthesis; lipid IV(A) from (3R)-3-hydroxytetradecanoyl-[acyl-carrier-protein] and UDP-N-acetyl-alpha-D-glucosamine: step 1/6. Its function is as follows. Involved in the biosynthesis of lipid A, a phosphorylated glycolipid that anchors the lipopolysaccharide to the outer membrane of the cell. This chain is Acyl-[acyl-carrier-protein]--UDP-N-acetylglucosamine O-acyltransferase, found in Cupriavidus pinatubonensis (strain JMP 134 / LMG 1197) (Cupriavidus necator (strain JMP 134)).